Here is a 198-residue protein sequence, read N- to C-terminus: Na(+)-translocating NADH-quinone reductase subunit E (198 aa).

Transmembrane regions (helical) follow at residues 11 to 31 (SVFIENMALSFFLGMCTFLAV), 35 to 55 (VSTAFGLGIAVIVVLGIAVPV), 77 to 97 (FLNFITFIGVIAALVQILEMI), 110 to 130 (GIFLPLITVNCAIFGGVSFMV), 140 to 160 (VVYGIGAGTGWMLAIVALAGL), and 176 to 196 (LGITFITVGLMALGFMSFSGI).

It belongs to the NqrDE/RnfAE family. Composed of six subunits; NqrA, NqrB, NqrC, NqrD, NqrE and NqrF.

The protein resides in the cell inner membrane. It catalyses the reaction a ubiquinone + n Na(+)(in) + NADH + H(+) = a ubiquinol + n Na(+)(out) + NAD(+). Functionally, NQR complex catalyzes the reduction of ubiquinone-1 to ubiquinol by two successive reactions, coupled with the transport of Na(+) ions from the cytoplasm to the periplasm. NqrA to NqrE are probably involved in the second step, the conversion of ubisemiquinone to ubiquinol. The sequence is that of Na(+)-translocating NADH-quinone reductase subunit E from Haemophilus ducreyi (strain 35000HP / ATCC 700724).